Here is a 174-residue protein sequence, read N- to C-terminus: Adenine phosphoribosyltransferase (174 aa).

It belongs to the purine/pyrimidine phosphoribosyltransferase family. In terms of assembly, homodimer.

The protein localises to the cytoplasm. The catalysed reaction is AMP + diphosphate = 5-phospho-alpha-D-ribose 1-diphosphate + adenine. The protein operates within purine metabolism; AMP biosynthesis via salvage pathway; AMP from adenine: step 1/1. Catalyzes a salvage reaction resulting in the formation of AMP, that is energically less costly than de novo synthesis. In Nitrosomonas eutropha (strain DSM 101675 / C91 / Nm57), this protein is Adenine phosphoribosyltransferase.